A 493-amino-acid chain; its full sequence is 6-phosphogluconate dehydrogenase, decarboxylating (493 aa).

NADP(+)-binding positions include 12–17, 35–37, 77–79, and Asn-105; these read GLAVMG, NRT, and VKA. Substrate contacts are provided by residues Asn-105 and 131 to 133; that span reads SGG. Lys-187 functions as the Proton acceptor in the catalytic mechanism. 190–191 contacts substrate; it reads HN. The Proton donor role is filled by Glu-194. Tyr-195, Lys-266, Arg-293, Arg-456, and His-462 together coordinate substrate.

Belongs to the 6-phosphogluconate dehydrogenase family. Homodimer.

It catalyses the reaction 6-phospho-D-gluconate + NADP(+) = D-ribulose 5-phosphate + CO2 + NADPH. It functions in the pathway carbohydrate degradation; pentose phosphate pathway; D-ribulose 5-phosphate from D-glucose 6-phosphate (oxidative stage): step 3/3. In terms of biological role, catalyzes the oxidative decarboxylation of 6-phosphogluconate to ribulose 5-phosphate and CO(2), with concomitant reduction of NADP to NADPH. The polypeptide is 6-phosphogluconate dehydrogenase, decarboxylating (gnd) (Dictyostelium discoideum (Social amoeba)).